Here is an 816-residue protein sequence, read N- to C-terminus: Protein hunchback (816 aa).

4 disordered regions span residues 33–92, 129–151, 165–185, and 197–229; these read LSHH…QPMD, QQHF…GGFN, YYGG…PTAV, and ALTP…LMSN. Low complexity-rich tracts occupy residues 49 to 60, 79 to 89, and 129 to 139; these read SNSNSGASSPRQ, QQQQQQQQQQQ, and QQHFQAAQHQQ. Threonine 199 bears the Phosphothreonine mark. Serine 209, serine 228, serine 230, and serine 231 each carry phosphoserine. A compositionally biased stretch (basic and acidic residues) spans 219-229; sequence EPEKEHDLMSN. C2H2-type zinc fingers lie at residues 261–283, 290–312, 318–340, and 346–364; these read YKCK…TRTH, LQCA…IRKH, FQCD…RKSH, and YRCA…FKLH. Disordered regions lie at residues 387-427, 536-612, and 679-734; these read VIDV…QQQQ, LQQQ…QLPH, and GSSA…SNPT. Low complexity-rich tracts occupy residues 399-427 and 536-560; these read SKSF…QQQQ and LQQQ…QQQQ. Residues 567-578 show a composition bias toward acidic residues; that stretch reads NEEDEEEEEHED. Residues serine 584 and serine 587 each carry the phosphoserine modification. Low complexity predominate over residues 712 to 734; that stretch reads SASSTASSSGNSSNASSSTSNPT. C2H2-type zinc fingers lie at residues 763–785 and 791–815; these read YECK…MGYH and FKCN…RNAH.

It belongs to the hunchback C2H2-type zinc-finger protein family.

The protein localises to the nucleus. Functionally, gap class segmentation protein that controls development of head structures. This is Protein hunchback from Drosophila virilis (Fruit fly).